Here is a 95-residue protein sequence, read N- to C-terminus: Cytosolic calcium-binding protein 3 (95 aa).

Tandem repeats lie at residues 30–35 (VEDAEK), 39–43 (DEEEK), 54–59 (VEEEKK), 67–71 (PEEKK), 75–79 (LEEKQ), and 90–94 (VEKAK). Residues 30 to 94 (VEDAEKTNED…AEEVAVEKAK (65 aa)) form a 6 X 5 AA approximate repeats of V-E-E-K-K region. Positions 54-95 (VEEEKKAEEVTETPEEKKTEALEEKQTEVAAAEEVAVEKAKE) are disordered. Residues 55–80 (EEEKKAEEVTETPEEKKTEALEEKQT) show a composition bias toward basic and acidic residues.

Low levels in roots (e.g. in cambium) and barely expressed in stems, shoots, flowers, siliques and leaves.

Its subcellular location is the cytoplasm. The protein localises to the cytosol. In terms of biological role, binds calcium Ca(2+) and may act as a signal mediator to buffer Ca(2+). In Arabidopsis thaliana (Mouse-ear cress), this protein is Cytosolic calcium-binding protein 3.